The primary structure comprises 120 residues: Crustacean hyperglycemic hormones 1 (120 aa).

Residues 1-24 form the signal peptide; it reads MIAFRAVWSALLASLLLLLLAPSA. 3 disulfides stabilise this stretch: Cys-53/Cys-89, Cys-69/Cys-85, and Cys-72/Cys-98. Position 118 is a valine amide (Val-118).

It belongs to the arthropod CHH/MIH/GIH/VIH hormone family. In terms of tissue distribution, produced by the medulla terminalis X-organ in the eyestalks and transported to the sinus gland where they are stored and released.

It localises to the secreted. Functionally, hormone found in the sinus gland of isopods and decapods which controls the blood sugar level. Has a secretagogue action over the amylase released from the midgut gland. May act as a stress hormone and may be involved in the control of molting and reproduction. This Penaeus japonicus (Kuruma prawn) protein is Crustacean hyperglycemic hormones 1.